The following is an 88-amino-acid chain: Small ribosomal subunit protein uS15c (88 aa).

It belongs to the universal ribosomal protein uS15 family. In terms of assembly, part of the 30S ribosomal subunit.

It localises to the plastid. The protein resides in the chloroplast. This Draba nemorosa (Woodland whitlowgrass) protein is Small ribosomal subunit protein uS15c (rps15).